A 373-amino-acid chain; its full sequence is Enoyl-[acyl-carrier-protein] reductase, mitochondrial (373 aa).

Residues 1–53 (MLVSQRVTGARARAPQLAGLLEAWYRHGRTTSSYSALSEPSRVRALVYGNHGD) constitute a mitochondrion transit peptide. The residue at position 61 (lysine 61) is an N6-acetyllysine; alternate. Lysine 61 bears the N6-succinyllysine; alternate mark. Catalysis depends on tyrosine 94, which acts as the Proton donor. NADP(+)-binding positions include asparagine 167, 193 to 196 (NSGV), and 216 to 218 (RDR). Residues lysine 252 and lysine 267 each carry the N6-acetyllysine; alternate modification. Lysine 252 and lysine 267 each carry N6-succinyllysine; alternate. NADP(+) is bound by residues 285 to 288 (YGGM) and 310 to 312 (FWL). The residue at position 316 (lysine 316) is an N6-succinyllysine. An NADP(+)-binding site is contributed by lysine 368.

The protein belongs to the zinc-containing alcohol dehydrogenase family. Quinone oxidoreductase subfamily. Homodimer. In terms of tissue distribution, expressed in Purkinje cells (at protein level).

The protein resides in the mitochondrion. It catalyses the reaction a 2,3-saturated acyl-[ACP] + NADP(+) = a (2E)-enoyl-[ACP] + NADPH + H(+). The catalysed reaction is (2E)-butenoyl-[ACP] + NADPH + H(+) = butanoyl-[ACP] + NADP(+). It carries out the reaction (2E)-hexenoyl-[ACP] + NADPH + H(+) = hexanoyl-[ACP] + NADP(+). The enzyme catalyses (2E)-octenoyl-[ACP] + NADPH + H(+) = octanoyl-[ACP] + NADP(+). It catalyses the reaction (2E)-decenoyl-[ACP] + NADPH + H(+) = decanoyl-[ACP] + NADP(+). The catalysed reaction is (2E)-dodecenoyl-[ACP] + NADPH + H(+) = dodecanoyl-[ACP] + NADP(+). It carries out the reaction (2E)-tetradecenoyl-[ACP] + NADPH + H(+) = tetradecanoyl-[ACP] + NADP(+). The enzyme catalyses (2E)-hexadecenoyl-[ACP] + NADPH + H(+) = hexadecanoyl-[ACP] + NADP(+). In terms of biological role, catalyzes the NADPH-dependent reduction of trans-2-enoyl thioesters in mitochondrial fatty acid synthesis (fatty acid synthesis type II). Fatty acid chain elongation in mitochondria uses acyl carrier protein (ACP) as an acyl group carrier, but the enzyme accepts both ACP and CoA thioesters as substrates in vitro. Displays a preference for medium-chain over short- and long-chain substrates. May provide the octanoyl chain used for lipoic acid biosynthesis, regulating protein lipoylation and mitochondrial respiratory activity particularly in Purkinje cells. Involved in iron homeostasis; affecting Fe-S cluster assembly and ceramide metabolism. Required for proper morphology and bioenergetic functions of mitochondria. Required for maintenance of neurons. In Mus musculus (Mouse), this protein is Enoyl-[acyl-carrier-protein] reductase, mitochondrial (Mecr).